A 112-amino-acid polypeptide reads, in one-letter code: Large ribosomal subunit protein bL17 (112 aa).

Belongs to the bacterial ribosomal protein bL17 family. Part of the 50S ribosomal subunit. Contacts protein L32.

This Desulforudis audaxviator (strain MP104C) protein is Large ribosomal subunit protein bL17.